We begin with the raw amino-acid sequence, 601 residues long: 3-hydroxy-3-methylglutaryl-coenzyme A reductase (601 aa).

The tract at residues 1-34 (MDSRRRSPTVTAKAAAGELPLAPHEGQNQQPSIP) is disordered. The next 2 helical transmembrane spans lie at 36-58 (SSDV…FFSV) and 86-106 (ALAS…LDFV). The interval 107-179 (QSLIYKPNNE…PLITPQNSEE (73 aa)) is linker. The catalytic stretch occupies residues 180–601 (DEDIIKAVVA…IASSQLESDS (422 aa)). The active-site Charge relay system is the Glu273. Residue Asn337 is glycosylated (N-linked (GlcNAc...) asparagine). Active-site charge relay system residues include Lys405 and Asp481. The active-site Proton donor is His579. Asn583 carries N-linked (GlcNAc...) asparagine glycosylation.

This sequence belongs to the HMG-CoA reductase family.

It localises to the endoplasmic reticulum membrane. The enzyme catalyses (R)-mevalonate + 2 NADP(+) + CoA = (3S)-3-hydroxy-3-methylglutaryl-CoA + 2 NADPH + 2 H(+). It participates in metabolic intermediate biosynthesis; (R)-mevalonate biosynthesis; (R)-mevalonate from acetyl-CoA: step 3/3. Catalyzes the synthesis of mevalonate. The specific precursor of all isoprenoid compounds present in plants. In Catharanthus roseus (Madagascar periwinkle), this protein is 3-hydroxy-3-methylglutaryl-coenzyme A reductase (HMGR).